A 382-amino-acid polypeptide reads, in one-letter code: Draxin-A (382 aa).

An N-terminal signal peptide occupies residues 1 to 22 (MMSSSWCLPLALLFSTLAVSHS). Disordered regions lie at residues 28–213 (THAK…PPSP), 233–252 (LPTLPPASTKPQKSGRGKMQ), and 275–297 (VDAWPSSRKKDKRRSKNLSSGNV). The segment covering 73–82 (RGAKASSGAG) has biased composition (low complexity). Positions 139–149 (GPRKGRGQGHG) are enriched in basic residues. A compositionally biased stretch (low complexity) spans 190–201 (SVSSAAAATSPS). Residues 281–290 (SRKKDKRRSK) show a composition bias toward basic residues. N-linked (GlcNAc...) asparagine glycosylation is found at Asn-291 and Asn-296.

This sequence belongs to the draxin family.

It is found in the secreted. Chemorepulsive axon guidance protein required for the development of spinal cord and forebrain commissures. Acts as a chemorepulsive guidance protein for commissural axons during development. Able to inhibit or repel neurite outgrowth from dorsal spinal cord. The sequence is that of Draxin-A (draxin-A) from Salmo salar (Atlantic salmon).